A 446-amino-acid polypeptide reads, in one-letter code: Low-affinity gluconate transporter (446 aa).

A topological domain (cytoplasmic) is located at residue Met-1. The helical transmembrane segment at Thr-2–Met-22 threads the bilayer. Residues Lys-23 to Met-26 are Periplasmic-facing. The chain crosses the membrane as a helical span at residues His-27–Leu-47. The Cytoplasmic portion of the chain corresponds to Asp-48–Met-58. Residues Gly-59 to Leu-79 form a helical membrane-spanning segment. Over His-80–Gly-109 the chain is Periplasmic. Residues Leu-110–Phe-130 traverse the membrane as a helical segment. Residues Ser-131 to Lys-142 lie on the Cytoplasmic side of the membrane. Residues Leu-143 to Ala-163 traverse the membrane as a helical segment. The Periplasmic portion of the chain corresponds to Pro-164–Gly-176. Residues Trp-177–Trp-197 traverse the membrane as a helical segment. The Cytoplasmic portion of the chain corresponds to Gly-198–Ser-225. Residues Phe-226–Ala-246 form a helical membrane-spanning segment. The Periplasmic portion of the chain corresponds to Ala-247–Glu-261. Residues Phe-262–Ala-282 traverse the membrane as a helical segment. The Cytoplasmic segment spans residues Met-283 to Glu-294. A helical transmembrane segment spans residues Ile-295–Val-315. Over Phe-316–Gly-330 the chain is Periplasmic. Residues Glu-331–Val-351 traverse the membrane as a helical segment. A topological domain (cytoplasmic) is located at residue Arg-352. Residues Ile-353–Ile-373 form a helical membrane-spanning segment. At Glu-374 to Ser-387 the chain is on the periplasmic side. A helical membrane pass occupies residues Ile-388–Phe-408. Residues Gly-409–Thr-424 are Cytoplasmic-facing. Residues Met-425 to Leu-445 form a helical membrane-spanning segment. A topological domain (periplasmic) is located at residue Ser-446.

This sequence belongs to the GntP permease family.

It is found in the cell inner membrane. Functionally, part of the gluconate utilization system Gnt-I; low-affinity intake of gluconate. This Escherichia coli O157:H7 protein is Low-affinity gluconate transporter (gntU).